A 713-amino-acid polypeptide reads, in one-letter code: Undecaprenyl-diphosphooligosaccharide--protein glycotransferase (713 aa).

At 1–11 (MLKKEYLKNPY) the chain is on the cytoplasmic side. A helical transmembrane segment spans residues 12–35 (LVLFAMIVLAYVFSVFCRFYWVWW). At 36–96 (ASEFNEYFFN…YWLYKITPFS (61 aa)) the chain is on the periplasmic side. The short motif at 52-54 (SND) is the DXD motif 1 element. Asp-54 lines the Mn(2+) pocket. A helical transmembrane segment spans residues 97–122 (FESIILYMSTFLSSLVVIPIILLANE). Residues 123 to 125 (YKR) lie on the Cytoplasmic side of the membrane. A helical membrane pass occupies residues 126–144 (PLMGFVAALLASVANSYYN). The Periplasmic portion of the chain corresponds to 145–152 (RTMSGYYD). Asp-152 contacts Mn(2+). A DXD motif 2 motif is present at residues 152-154 (DTD). A helical membrane pass occupies residues 153 to 174 (TDMLVIVLPMFILFFMVRMILK). Residues 175 to 176 (KD) are Cytoplasmic-facing. The chain crosses the membrane as a helical span at residues 177–192 (FFSLIALPLFIGIYLW). Residues 193–197 (WYPSS) are Periplasmic-facing. 194–196 (YPS) contributes to the [alpha-D-GalNAc-(1-&gt;4)]2-[beta-D-Glc-(1-&gt;3)]-[alpha-D-GalNAc-(1-&gt;4)]2-alpha-D-GalNAc-(1-&gt;3)-alpha-D-diNAcBac-tri-trans,hepta-cis-undecaprenyl diphosphate binding site. Residues 198-215 (YTLNVALIGLFLIYTLIF) form a helical membrane-spanning segment. Residues 216–220 (HRKEK) are Cytoplasmic-facing. Residues 221 to 233 (IFYIAVILSSLTL) form a helical membrane-spanning segment. Residues 234–237 (SNIA) are Periplasmic-facing. The chain crosses the membrane as a helical span at residues 238-254 (WFYQSAIIVILFALFAL). The Cytoplasmic segment spans residues 255–260 (EQKRLN). The helical transmembrane segment at 261–278 (FMIIGILGSATLIFLILS) threads the bilayer. Over 279–324 (GGVDPILYQLKFYIFRSDESANLTQGFMYFNVNQTIQEVENVDFSE) the chain is Periplasmic. Residue Tyr-291 participates in [alpha-D-GalNAc-(1-&gt;4)]2-[beta-D-Glc-(1-&gt;3)]-[alpha-D-GalNAc-(1-&gt;4)]2-alpha-D-GalNAc-(1-&gt;3)-alpha-D-diNAcBac-tri-trans,hepta-cis-undecaprenyl diphosphate binding. Residues 313-316 (TIQE) carry the TIXE motif motif. Glu-316 is a binding site for Mn(2+). Residues 325-347 (FMRRISGSEIVFLFSLFGFVWLL) form a helical membrane-spanning segment. The Cytoplasmic segment spans residues 348-352 (RKHKS). Residues 353–369 (MIMALPILVLGFLALKG) traverse the membrane as a helical segment. At 370-373 (GLRF) the chain is on the periplasmic side. A [alpha-D-GalNAc-(1-&gt;4)]2-[beta-D-Glc-(1-&gt;3)]-[alpha-D-GalNAc-(1-&gt;4)]2-alpha-D-GalNAc-(1-&gt;3)-alpha-D-diNAcBac-tri-trans,hepta-cis-undecaprenyl diphosphate-binding site is contributed by Arg-372. A helical transmembrane segment spans residues 374–396 (TIYSVPVMALGFGFLLSEFKAIL). Over 397-406 (VKKYSQLTSN) the chain is Cytoplasmic. Residues 407-427 (VCIVFATILTLAPVFIHIYNY) form a helical membrane-spanning segment. Residues 428–713 (KAPTVFSQNE…RDAKVFKLKI (286 aa)) lie on the Periplasmic side of the membrane. The interval 457 to 459 (WWD) is interacts with target acceptor peptide in protein substrate. The WWDYG motif signature appears at 457–461 (WWDYG). Tyr-462 contributes to the [alpha-D-GalNAc-(1-&gt;4)]2-[beta-D-Glc-(1-&gt;3)]-[alpha-D-GalNAc-(1-&gt;4)]2-alpha-D-GalNAc-(1-&gt;3)-alpha-D-diNAcBac-tri-trans,hepta-cis-undecaprenyl diphosphate binding site. Asn-534 carries N-linked (DATDGlc) asparagine glycosylation. An MI motif motif is present at residues 568–575 (MSLIFSTV).

This sequence belongs to the STT3 family. It depends on Mg(2+) as a cofactor. Mn(2+) is required as a cofactor.

Its subcellular location is the cell inner membrane. It carries out the reaction tritrans,heptacis-undecaprenyl diphosphooligosaccharide + [protein]-L-asparagine = tritrans,heptacis-undecaprenyl diphosphate + a glycoprotein with the oligosaccharide chain attached by N-beta-D-glycosyl linkage to protein L-asparagine.. It functions in the pathway protein modification; protein glycosylation. In terms of biological role, oligosaccharyl transferase (OST) that catalyzes the initial transfer of a defined glycan (GalNAc(2)GlcGalNAc(3)Bac(NAc)(2) in eubacteria, where Bac(NAc)(2) is di-N-acetyl bacillosamine) from the lipid carrier undecaprenol-pyrophosphate to an asparagine residue within an Asp/Glu-Asn-X-Ser/Thr consensus motif in nascent polypeptide chains, the first step in protein N-glycosylation. This is Undecaprenyl-diphosphooligosaccharide--protein glycotransferase (pglB) from Campylobacter jejuni subsp. jejuni serotype O:2 (strain ATCC 700819 / NCTC 11168).